The sequence spans 383 residues: Probable purine permease 16 (383 aa).

Helical transmembrane passes span 30–50, 72–92, 113–133, 138–158, 166–186, 203–223, 247–267, 297–317, 322–342, and 346–363; these read ISVFICGFLIFAGDSLVMLLL, WTQALIQNAAFPILIPFFFIL, VLSLYVSLGVLVSVYSKLYAL, VGWGILLSTQLILTSLFSAFI, WIIISIIFTLGADFFGGPAFA, LILIFPTLAFSLSLCLMQLGF, ICVSFIATLICTVGLFASGEF, VWAVGLLGLVLLVSGLFADVV, SPVVALLVVLAFDFMDDEFGW, and GALLGAVLALASYFYSLH.

It belongs to the purine permeases (TC 2.A.7.14) family.

It is found in the membrane. The chain is Probable purine permease 16 (PUP16) from Arabidopsis thaliana (Mouse-ear cress).